Consider the following 130-residue polypeptide: Small ribosomal subunit protein uS11 (130 aa).

It belongs to the universal ribosomal protein uS11 family. In terms of assembly, part of the 30S ribosomal subunit. Interacts with proteins S7 and S18. Binds to IF-3.

Its function is as follows. Located on the platform of the 30S subunit, it bridges several disparate RNA helices of the 16S rRNA. Forms part of the Shine-Dalgarno cleft in the 70S ribosome. In Prochlorococcus marinus (strain NATL2A), this protein is Small ribosomal subunit protein uS11.